The following is a 231-amino-acid chain: Large ribosomal subunit protein uL1 (231 aa).

It belongs to the universal ribosomal protein uL1 family. In terms of assembly, part of the 50S ribosomal subunit.

Binds directly to 23S rRNA. The L1 stalk is quite mobile in the ribosome, and is involved in E site tRNA release. Its function is as follows. Protein L1 is also a translational repressor protein, it controls the translation of the L11 operon by binding to its mRNA. The sequence is that of Large ribosomal subunit protein uL1 from Neisseria gonorrhoeae (strain ATCC 700825 / FA 1090).